The chain runs to 202 residues: Peptidyl-tRNA hydrolase (202 aa).

Tyr17 is a tRNA binding site. His22 serves as the catalytic Proton acceptor. TRNA contacts are provided by Phe76, Asn78, and Asn124.

The protein belongs to the PTH family. Monomer.

The protein localises to the cytoplasm. The catalysed reaction is an N-acyl-L-alpha-aminoacyl-tRNA + H2O = an N-acyl-L-amino acid + a tRNA + H(+). Hydrolyzes ribosome-free peptidyl-tRNAs (with 1 or more amino acids incorporated), which drop off the ribosome during protein synthesis, or as a result of ribosome stalling. Functionally, catalyzes the release of premature peptidyl moieties from peptidyl-tRNA molecules trapped in stalled 50S ribosomal subunits, and thus maintains levels of free tRNAs and 50S ribosomes. This chain is Peptidyl-tRNA hydrolase, found in Nitratidesulfovibrio vulgaris (strain DSM 19637 / Miyazaki F) (Desulfovibrio vulgaris).